Here is a 323-residue protein sequence, read N- to C-terminus: Isoeugenol synthase 1 (323 aa).

NADP(+) is bound by residues 14-17 (TGYL), 36-47 (VMPLKKNSDDSK), 88-90 (VPQ), 113-115 (SEF), K135, and 155-157 (NSL). The active-site Proton donor/acceptor is K135.

It belongs to the NmrA-type oxidoreductase family. As to expression, expressed in flowers, especially in corolla and tubes of petals, probably in both epidermal and mesophyll cell layers.

The catalysed reaction is (E)-isoeugenol + acetate + NADP(+) = (E)-coniferyl acetate + NADPH. Its pathway is aromatic compound metabolism; phenylpropanoid biosynthesis. Its activity is regulated as follows. Inhibited by zinc and copper ions. Repressed by 4-bromo-cinnamyl acetate. Involved in the biosynthesis of the floral volatile isoeugenol. Catalyzes the synthesis of the phenylpropene isoeugenol from coniferyl acetate. Phenylpropenes are the primary constituents of various essential plant oils. They are produced as antimicrobial and antianimal compounds, or as floral attractants of pollinators. Isoeugenol is a characteristic aromatic constituent of spices and a floral volatile compound. This Petunia hybrida (Petunia) protein is Isoeugenol synthase 1.